Consider the following 516-residue polypeptide: Maturase K (516 aa).

It belongs to the intron maturase 2 family. MatK subfamily.

It is found in the plastid. The protein resides in the chloroplast. Usually encoded in the trnK tRNA gene intron. Probably assists in splicing its own and other chloroplast group II introns. This Chara vulgaris (Common stonewort) protein is Maturase K.